Reading from the N-terminus, the 432-residue chain is ATP-dependent RNA helicase RhlB (432 aa).

The short motif at 9 to 37 (QNFADLGLQPQVIDGLNAKGFIKCTPIQA) is the Q motif element. The region spanning 40 to 219 (LPVLLAGQDI…FEHMQEPEHV (180 aa)) is the Helicase ATP-binding domain. 53 to 60 (AQTGTGKT) lines the ATP pocket. The DEAD box signature appears at 165 to 168 (DEAD). Positions 245–390 (ALLQTLIEEE…QSDYDASALL (146 aa)) constitute a Helicase C-terminal domain. The interval 397–432 (LRLQRRPQQNRRNNNGQRQGGNRKHSRPRQPRNTQS) is disordered. Residues 417–426 (GNRKHSRPRQ) are compositionally biased toward basic residues.

Belongs to the DEAD box helicase family. RhlB subfamily. As to quaternary structure, component of the RNA degradosome, which is a multiprotein complex involved in RNA processing and mRNA degradation.

Its subcellular location is the cytoplasm. The enzyme catalyses ATP + H2O = ADP + phosphate + H(+). DEAD-box RNA helicase involved in RNA degradation. Has RNA-dependent ATPase activity and unwinds double-stranded RNA. The polypeptide is ATP-dependent RNA helicase RhlB (Aliivibrio fischeri (strain MJ11) (Vibrio fischeri)).